Here is a 460-residue protein sequence, read N- to C-terminus: Ankyrin repeat and MYND domain-containing protein 2 (460 aa).

ANK repeat units lie at residues 45 to 74 (HGMT…DVNC), 79 to 108 (HGYT…ETDV), and 159 to 188 (KLAG…NPLL). Zn(2+) is bound by residues Cys320, Cys323, Cys332, Cys335, Cys341, Cys345, His353, and Cys357. The MYND-type zinc finger occupies 320–357 (CTTCGEKGADKRCSVCKVVMYCDQNCQKTHWFTHKKVC). Composition is skewed to basic and acidic residues over residues 371-387 (AAKE…KDEA) and 425-436 (ELTKEPEARAPR). The disordered stretch occupies residues 371 to 460 (AAKEKRRQEK…ALQKIQDSEE (90 aa)).

The protein resides in the cell projection. It is found in the cilium. Functionally, may be involved in the trafficking of signaling proteins to the cilia. This chain is Ankyrin repeat and MYND domain-containing protein 2 (ANKMY2), found in Gallus gallus (Chicken).